A 550-amino-acid polypeptide reads, in one-letter code: Glucose-6-phosphate isomerase (550 aa).

E357 (proton donor) is an active-site residue. Active-site residues include H388 and K516.

Belongs to the GPI family.

Its subcellular location is the cytoplasm. It carries out the reaction alpha-D-glucose 6-phosphate = beta-D-fructose 6-phosphate. Its pathway is carbohydrate biosynthesis; gluconeogenesis. It participates in carbohydrate degradation; glycolysis; D-glyceraldehyde 3-phosphate and glycerone phosphate from D-glucose: step 2/4. Catalyzes the reversible isomerization of glucose-6-phosphate to fructose-6-phosphate. The polypeptide is Glucose-6-phosphate isomerase (Psychromonas ingrahamii (strain DSM 17664 / CCUG 51855 / 37)).